Reading from the N-terminus, the 352-residue chain is Nicotinate-nucleotide--dimethylbenzimidazole phosphoribosyltransferase (352 aa).

Catalysis depends on Glu316, which acts as the Proton acceptor.

This sequence belongs to the CobT family.

The catalysed reaction is 5,6-dimethylbenzimidazole + nicotinate beta-D-ribonucleotide = alpha-ribazole 5'-phosphate + nicotinate + H(+). The protein operates within nucleoside biosynthesis; alpha-ribazole biosynthesis; alpha-ribazole from 5,6-dimethylbenzimidazole: step 1/2. Catalyzes the synthesis of alpha-ribazole-5'-phosphate from nicotinate mononucleotide (NAMN) and 5,6-dimethylbenzimidazole (DMB). This Ruminiclostridium cellulolyticum (strain ATCC 35319 / DSM 5812 / JCM 6584 / H10) (Clostridium cellulolyticum) protein is Nicotinate-nucleotide--dimethylbenzimidazole phosphoribosyltransferase.